The sequence spans 94 residues: Large ribosomal subunit protein uL23 (94 aa).

Belongs to the universal ribosomal protein uL23 family. Part of the 50S ribosomal subunit. Contacts protein L29, and trigger factor when it is bound to the ribosome.

In terms of biological role, one of the early assembly proteins it binds 23S rRNA. One of the proteins that surrounds the polypeptide exit tunnel on the outside of the ribosome. Forms the main docking site for trigger factor binding to the ribosome. In Akkermansia muciniphila (strain ATCC BAA-835 / DSM 22959 / JCM 33894 / BCRC 81048 / CCUG 64013 / CIP 107961 / Muc), this protein is Large ribosomal subunit protein uL23.